Here is a 143-residue protein sequence, read N- to C-terminus: Cofilin/actin-depolymerizing factor homolog 2 (143 aa).

Residues 4-141 (GVKVSDECVY…FEDELRTIIL (138 aa)) enclose the ADF-H domain.

It belongs to the actin-binding proteins ADF family. As to quaternary structure, interacts with monomeric actin, does not bind to actin polymers.

The protein localises to the cytoplasm. It localises to the cytoskeleton. Its function is as follows. Not involved in actin polymerisation, instead functions to stimulate nucleotide exchange on monomeric actin and influence turnover of the small amount of cytosolic actin microfilaments. Essential for erythrocytic schizogony. The polypeptide is Cofilin/actin-depolymerizing factor homolog 2 (Plasmodium falciparum (isolate 3D7)).